Reading from the N-terminus, the 190-residue chain is Probable RNA-binding protein 18 (190 aa).

The RRM domain occupies 25 to 106; that stretch reads HRLWIGNLDP…KKLVVRWAHA (82 aa). Residues 166–190 form a disordered region; it reads VYSYFKPPDKKRTTPYSRTAWKSRR.

This is Probable RNA-binding protein 18 (Rbm18) from Mus musculus (Mouse).